A 1141-amino-acid polypeptide reads, in one-letter code: cGMP-inhibited 3',5'-cyclic phosphodiesterase 3A (1141 aa).

A disordered region spans residues Met-1–Gly-42. 6 helical membrane passes run Leu-61–Val-81, Leu-130–Leu-150, Ala-160–Val-180, Leu-185–Val-205, Leu-210–Glu-230, and Phe-232–Ala-252. Position 312 is a phosphoserine (Ser-312). 2 positions are modified to phosphoserine; by PKA and PKC: Ser-428 and Ser-438. Positions Arg-436–Thr-448 are enriched in low complexity. Positions Arg-436–Pro-482 are disordered. Polar residues predominate over residues Ser-465–Pro-482. Residues Ser-492, Ser-520, and Ser-524 each carry the phosphoserine modification. The disordered stretch occupies residues Arg-590–Glu-640. Residues Ala-608–Val-637 are compositionally biased toward polar residues. An interaction with SLFN12 region spans residues Lys-669–Gln-1141. The PDEase domain occupies Pro-674–Glu-1093. His-752 serves as the catalytic Proton donor. An AMP-binding site is contributed by His-752. Mn(2+)-binding residues include His-756, His-836, Asp-837, and Asp-950. 3 residues coordinate AMP: Asp-837, Asp-950, and Gln-1001. Asp-837 serves as a coordination point for Mg(2+). Disordered regions lie at residues Pro-1023–Lys-1062 and Glu-1100–Gln-1141. Over residues Asp-1029–Glu-1056 the composition is skewed to acidic residues. Ser-1033 is modified (phosphoserine). Thr-1036 carries the post-translational modification Phosphothreonine. A compositionally biased stretch (polar residues) spans Glu-1100–Ser-1113. A Glycyl lysine isopeptide (Lys-Gly) (interchain with G-Cter in SUMO2) cross-link involves residue Lys-1120. Residues Glu-1125 to Gln-1141 are compositionally biased toward basic and acidic residues.

This sequence belongs to the cyclic nucleotide phosphodiesterase family. PDE3 subfamily. In terms of assembly, homodimer. Interacts with SLFN12; direct low affinity interaction which is stimulated by binding of 17beta-estradiol/E2 to PDE3A and that positively regulates the ribonuclease activity of SLFN12. Requires Mn(2+) as cofactor. Mg(2+) serves as cofactor.

It localises to the membrane. Its subcellular location is the cytoplasm. The protein resides in the cytosol. It catalyses the reaction a nucleoside 3',5'-cyclic phosphate + H2O = a nucleoside 5'-phosphate + H(+). The enzyme catalyses 3',5'-cyclic AMP + H2O = AMP + H(+). It carries out the reaction 3',5'-cyclic GMP + H2O = GMP + H(+). The catalysed reaction is 3',5'-cyclic UMP + H2O = UMP + H(+). Its activity is regulated as follows. Inhibited by cGMP. Inhibited by 17beta-estradiol. Inhibited by milrinone. In terms of biological role, cyclic nucleotide phosphodiesterase with specificity for the second messengers cAMP and cGMP, which are key regulators of many important physiological processes. Also has activity toward cUMP. Independently of its catalytic activity it is part of an E2/17beta-estradiol-induced pro-apoptotic signaling pathway. E2 stabilizes the PDE3A/SLFN12 complex in the cytosol, promoting the dephosphorylation of SLFN12 and activating its pro-apoptotic ribosomal RNA/rRNA ribonuclease activity. This apoptotic pathway might be relevant in tissues with high concentration of E2 and be for instance involved in placenta remodeling. The protein is cGMP-inhibited 3',5'-cyclic phosphodiesterase 3A of Homo sapiens (Human).